A 938-amino-acid polypeptide reads, in one-letter code: E3 ubiquitin-protein ligase CBL-B (938 aa).

The segment at 35–167 (PPKQAAADRR…KAIFPNGQFQ (133 aa)) is 4H. The region spanning 35–343 (PPKQAAADRR…GRSYNPDLTG (309 aa)) is the Cbl-PTB domain. The EF-hand-like stretch occupies residues 168–240 (GDNFRITKAD…FEFDIFTRLF (73 aa)). Ca(2+) contacts are provided by Asp221, Thr223, Asn225, Tyr227, and Glu232. The interval 241-343 (QPWGSILRNW…GRSYNPDLTG (103 aa)) is SH2-like. Ser282 carries the phosphoserine; by PKC/PRKCQ modification. A 4-O-phospho-L-tyrosine-binding site is contributed by Arg286. Positions 344-372 (LCEPTPHDHIKVTQEQYELYCEMGSTFQL) are linker. Position 363 is a phosphotyrosine (Tyr363). Residues 373–412 (CKICAENDKDVKIEPCGHLMCTSCLTAWQESDGQGCPFCR) form an RING-type zinc finger. Positions 465-588 (ASVRKCTDRQ…SVPSRDQPMP (124 aa)) are disordered. Positions 473-486 (RQNSPVTSPGSSPL) are enriched in polar residues. 6 positions are modified to phosphoserine: Ser476, Ser480, Ser484, Ser521, Ser525, and Ser529. An interaction with VAV1 region spans residues 543–567 (PLPAPPPPLRDPPPPPERPPPIPPD). A compositionally biased stretch (pro residues) spans 544-566 (LPAPPPPLRDPPPPPERPPPIPP). Ser633 is subject to Phosphoserine. 2 positions are modified to phosphotyrosine: Tyr664 and Tyr708. Disordered stretches follow at residues 702–725 (EEDDDEYKIPSSHPVSLNSQPSHC) and 771–885 (DALP…EAAL). Positions 714-724 (HPVSLNSQPSH) are enriched in polar residues. A compositionally biased stretch (pro residues) spans 775–784 (PSLPPPPPPA). Residues 794-804 (PPGSSSRPSSG) are compositionally biased toward low complexity. The span at 839 to 855 (NRASQDYDQLPSSSDGS) shows a compositional bias: polar residues. Residue Tyr845 is modified to Phosphotyrosine. Residues 847-883 (QLPSSSDGSQAPARPPKPRPRRTAPEIHHRKPHGPEA) are interaction with SH3KBP1. A compositionally biased stretch (basic residues) spans 862–878 (PKPRPRRTAPEIHHRKP). In terms of domain architecture, UBA spans 887–926 (NVDAKIAKLMGEGYAFEEVKRALEIAQNNLEVARSILREF).

As to quaternary structure, interacts with SH3 domain-containing proteins LCK, CRK and SORBS1. Interacts with LCP2 and ZAP70. Interacts with CBL. Interacts with SH3 domain-containing proteins VAV1, FYN, FGR, PLCG1, GRB2, CRKL, PIK3R1 and SH3KBP1/CIN85. Identified in heterotrimeric complexes with SH3KBP1/CIN85, CD2AP and ARHGEF7, where one CBLB peptide binds two copies of the other protein. Interacts with poly-ubiquitinated proteins. Dimerization is required for the binding of poly-ubiquitin, but not for the binding of mono-ubiquitin. Interacts with EGFR (phosphorylated). Interacts with IFT20. Post-translationally, phosphorylated on tyrosine and serine residues upon TCR or BCR activation, and upon various types of cell stimulation. Auto-ubiquitinated upon EGF-mediated cell activation or upon T-cell costimulation by CD28; which promotes proteasomal degradation.

The protein resides in the cytoplasm. It catalyses the reaction S-ubiquitinyl-[E2 ubiquitin-conjugating enzyme]-L-cysteine + [acceptor protein]-L-lysine = [E2 ubiquitin-conjugating enzyme]-L-cysteine + N(6)-ubiquitinyl-[acceptor protein]-L-lysine.. Its pathway is protein modification; protein ubiquitination. Functionally, E3 ubiquitin-protein ligase which accepts ubiquitin from specific E2 ubiquitin-conjugating enzymes, and transfers it to substrates, generally promoting their degradation by the proteasome. Negatively regulates TCR (T-cell receptor), BCR (B-cell receptor) and FCER1 (high affinity immunoglobulin epsilon receptor) signal transduction pathways. In naive T-cells, inhibits VAV1 activation upon TCR engagement and imposes a requirement for CD28 costimulation for proliferation and IL-2 production. Also acts by promoting PIK3R1/p85 ubiquitination, which impairs its recruitment to the TCR and subsequent activation. In activated T-cells, inhibits PLCG1 activation and calcium mobilization upon restimulation and promotes anergy. In B-cells, acts by ubiquitinating SYK and promoting its proteasomal degradation. Slightly promotes SRC ubiquitination. May be involved in EGFR ubiquitination and internalization. May be functionally coupled with the E2 ubiquitin-protein ligase UB2D3. In association with CBL, required for proper feedback inhibition of ciliary platelet-derived growth factor receptor-alpha (PDGFRA) signaling pathway via ubiquitination and internalization of PDGFRA. The sequence is that of E3 ubiquitin-protein ligase CBL-B (Cblb) from Rattus norvegicus (Rat).